Here is a 430-residue protein sequence, read N- to C-terminus: MATSAGKLRTLYSAHSSLSSLPPSARPTLQLATLRSYATTTPHDSPIGNTSNTPPTVKRPATAFKDKLNAGPAFSDFVSGKKDEPLDPAEAYALKTALVGPPGRKKEITRLPPWLKTPIPDSSNYKRIKNDLRGLNLHTVCEEARCPNIADCWGGSSKSAATATIMLMGDTCTRGCRFCSVKTSNKPPPLDPHEPDNTAEALSRWGLGYVVLTTVDRDDLADGGARHCAETVMKIKQKAPNILVECLTGDYAGDLDMVALVANSGLDVFAHNVETVEALTPFVRDRRASFQQSLRVLKAAKAAKPELITKTSLMLGLGETEAQLWDALRALRAINVDVVTFGQYMRPTKRHMAVHEYVRPDVFDLWKERALEMGFLYCASGPLVRSSYKAGEAFIENVLKKRKGGNAGSVNEKVTTSENVKKLVAGEAMR.

The N-terminal 37 residues, 1–37 (MATSAGKLRTLYSAHSSLSSLPPSARPTLQLATLRSY), are a transit peptide targeting the mitochondrion. Polar residues predominate over residues 39 to 55 (TTTPHDSPIGNTSNTPP). The segment at 39–59 (TTTPHDSPIGNTSNTPPTVKR) is disordered. The [4Fe-4S] cluster site is built by Cys141, Cys146, Cys152, Cys172, Cys176, Cys179, and Ser387. One can recognise a Radical SAM core domain in the interval 155–376 (GSSKSAATAT…KERALEMGFL (222 aa)).

The protein belongs to the radical SAM superfamily. Lipoyl synthase family. Requires [4Fe-4S] cluster as cofactor.

It is found in the mitochondrion. The catalysed reaction is [[Fe-S] cluster scaffold protein carrying a second [4Fe-4S](2+) cluster] + N(6)-octanoyl-L-lysyl-[protein] + 2 oxidized [2Fe-2S]-[ferredoxin] + 2 S-adenosyl-L-methionine + 4 H(+) = [[Fe-S] cluster scaffold protein] + N(6)-[(R)-dihydrolipoyl]-L-lysyl-[protein] + 4 Fe(3+) + 2 hydrogen sulfide + 2 5'-deoxyadenosine + 2 L-methionine + 2 reduced [2Fe-2S]-[ferredoxin]. Its pathway is protein modification; protein lipoylation via endogenous pathway; protein N(6)-(lipoyl)lysine from octanoyl-[acyl-carrier-protein]: step 2/2. Its function is as follows. Catalyzes the radical-mediated insertion of two sulfur atoms into the C-6 and C-8 positions of the octanoyl moiety bound to the lipoyl domains of lipoate-dependent enzymes, thereby converting the octanoylated domains into lipoylated derivatives. The chain is Lipoyl synthase, mitochondrial from Ajellomyces capsulatus (strain H143) (Darling's disease fungus).